Here is a 945-residue protein sequence, read N- to C-terminus: Kinesin-like protein KIN-7F (945 aa).

A Kinesin motor domain is found at 34–356; the sequence is RILVSVRLRP…LLFASCAKEV (323 aa). 120–127 contributes to the ATP binding site; the sequence is GQTSSGKT. Residues 365–437 are a coiled coil; sequence VMSDKALVKQ…QDLLQVVGDN (73 aa). 2 disordered regions span residues 484–512 and 553–588; these read RRVA…SVSS and NECL…MNSR. Composition is skewed to polar residues over residues 495–512 and 560–587; these read QAEN…SVSS and AVGS…SMNS.

Belongs to the TRAFAC class myosin-kinesin ATPase superfamily. Kinesin family. KIN-7 subfamily. In terms of assembly, binds microtubules.

Binds ATP/ADP in vitro. Possesses low ATPase activity but high affinity for microtubules. The polypeptide is Kinesin-like protein KIN-7F (Oryza sativa subsp. japonica (Rice)).